Reading from the N-terminus, the 224-residue chain is Small ribosomal subunit protein uS3 (224 aa).

Positions 38-106 constitute a KH type-2 domain; sequence IRKFISKKLK…QVHINIVEIK (69 aa).

Belongs to the universal ribosomal protein uS3 family. In terms of assembly, part of the 30S ribosomal subunit. Forms a tight complex with proteins S10 and S14.

In terms of biological role, binds the lower part of the 30S subunit head. Binds mRNA in the 70S ribosome, positioning it for translation. In Lactobacillus helveticus (strain DPC 4571), this protein is Small ribosomal subunit protein uS3.